A 673-amino-acid polypeptide reads, in one-letter code: DNA ligase (673 aa).

Residues 33-37, 82-83, and Glu-113 each bind NAD(+); these read DYEYD and SL. The N6-AMP-lysine intermediate role is filled by Lys-115. Residues Arg-136, Glu-170, Lys-285, and Lys-309 each contribute to the NAD(+) site. Cys-403, Cys-406, Cys-421, and Cys-426 together coordinate Zn(2+). The region spanning 583 to 672 is the BRCT domain; it reads AKSDILKGYT…SREEAEKILM (90 aa).

The protein belongs to the NAD-dependent DNA ligase family. LigA subfamily. The cofactor is Mg(2+). Requires Mn(2+) as cofactor.

It carries out the reaction NAD(+) + (deoxyribonucleotide)n-3'-hydroxyl + 5'-phospho-(deoxyribonucleotide)m = (deoxyribonucleotide)n+m + AMP + beta-nicotinamide D-nucleotide.. In terms of biological role, DNA ligase that catalyzes the formation of phosphodiester linkages between 5'-phosphoryl and 3'-hydroxyl groups in double-stranded DNA using NAD as a coenzyme and as the energy source for the reaction. It is essential for DNA replication and repair of damaged DNA. The chain is DNA ligase from Caldicellulosiruptor bescii (strain ATCC BAA-1888 / DSM 6725 / KCTC 15123 / Z-1320) (Anaerocellum thermophilum).